A 2067-amino-acid chain; its full sequence is Negative regulator of mitosis (2067 aa).

Positions 100-118 are enriched in polar residues; sequence SLAIPQTTSQQSNRPSGSE. Disordered stretches follow at residues 100–132, 332–408, and 452–480; these read SLAI…STSK, ESIP…DDFA, and GSQS…GFNP. Residues 336–347 carry the Nuclear localization signal motif; it reads SHRKKKRRDTGG. Positions 336 to 355 are enriched in basic residues; sequence SHRKKKRRDTGGTRSKRRSS. Polar residues predominate over residues 384–396; the sequence is WNASVMSHSQYST. 4 PC repeats span residues 1434 to 1465, 1482 to 1520, 1532 to 1562, and 1625 to 1659; these read AGIM…ADQE, AAGF…TKNV, GATI…TVRF, and GLCF…ISRL. Positions 2020–2042 are disordered; the sequence is FPSESDEEKRDRQETGSMPSSGH.

Belongs to the APC1 family.

In terms of biological role, negative regulator of mitosis in E.nidulans. This protein is part of a regulatory pathway that includes the nimA protein kinase. It is required to prevent premature entry into mitosis. Mutations to this protein both cause cells to enter mitosis and prevent them from leaving mitosis. The protein is Negative regulator of mitosis (bimE) of Emericella nidulans (strain FGSC A4 / ATCC 38163 / CBS 112.46 / NRRL 194 / M139) (Aspergillus nidulans).